A 69-amino-acid chain; its full sequence is Large ribosomal subunit protein uL29 (69 aa).

The protein belongs to the universal ribosomal protein uL29 family.

This is Large ribosomal subunit protein uL29 from Carboxydothermus hydrogenoformans (strain ATCC BAA-161 / DSM 6008 / Z-2901).